Reading from the N-terminus, the 694-residue chain is Type VI secretion system spike protein VgrG2 (694 aa).

This sequence belongs to the VgrG protein family.

It is found in the secreted. Part of the type VI secretion system specialized secretion system, which delivers several virulence factors in both prokaryotic and eukaryotic cells during infection. Forms the spike at the tip of the elongating tube formed by haemolysin co-regulated protein Hcp. Allows the delivery of the VasX antibacterial toxin to target cells where it exerts its toxicity. The protein is Type VI secretion system spike protein VgrG2 (vgrG2) of Vibrio cholerae serotype O1 (strain ATCC 39315 / El Tor Inaba N16961).